Here is a 907-residue protein sequence, read N- to C-terminus: HMG box transcription factor BBX (907 aa).

Positions 1–19 are enriched in basic and acidic residues; that stretch reads MKGSNRNKDHSTEGEGDGK. Disordered regions lie at residues 1–24, 37–80, 152–185, and 220–242; these read MKGS…PKRK, LDFS…EQRA, TTNK…PTPK, and TPEA…RQKS. 2 stretches are compositionally biased toward acidic residues: residues 39–52 and 61–75; these read FSEE…EEDI and DGLE…DDES. The segment at residues 80–148 is a DNA-binding region (HMG box); the sequence is ARRPMNAFLL…AFMKANPGYR (69 aa). Polar residues predominate over residues 152 to 164; it reads TTNKPVKSPTPTV. S242 is modified (phosphoserine). K384 participates in a covalent cross-link: Glycyl lysine isopeptide (Lys-Gly) (interchain with G-Cter in SUMO2). Disordered stretches follow at residues 435–483, 495–612, and 628–672; these read IIED…DIES, DWGV…SERS, and TSLR…KKFK. Positions 447-457 are enriched in basic residues; the sequence is KIKKKKKKNKL. Phosphoserine is present on residues S476 and S483. Composition is skewed to basic and acidic residues over residues 496–506 and 534–550; these read WGVDKLGETPR and KKVS…ESRP. K571 is covalently cross-linked (Glycyl lysine isopeptide (Lys-Gly) (interchain with G-Cter in SUMO2)). A compositionally biased stretch (basic and acidic residues) spans 591–612; the sequence is KPEDSDCHRKTETCGSRKSERS. Over residues 656 to 668 the composition is skewed to polar residues; the sequence is ESWTFNQSGTSGS. K693 is covalently cross-linked (Glycyl lysine isopeptide (Lys-Gly) (interchain with G-Cter in SUMO2)). Residue S701 is modified to Phosphoserine. Disordered regions lie at residues 708–736, 769–854, and 877–907; these read KCVS…SGDK, NALS…SSTP, and VHRG…CADQ. Residues 723-732 show a composition bias toward low complexity; that stretch reads SSESTKTSKG. Positions 772-783 are enriched in polar residues; that stretch reads SIPNTPEPTTMQ. S789 is subject to Phosphoserine. The span at 790–801 shows a compositional bias: basic residues; sequence QKRKARKTKITH. S811 is subject to Phosphoserine.

The protein localises to the nucleus. Transcription factor that is necessary for cell cycle progression from G1 to S phase. The chain is HMG box transcription factor BBX (Bbx) from Mus musculus (Mouse).